The primary structure comprises 101 residues: uncharacterized protein (101 aa).

2 helical membrane-spanning segments follow: residues 52–72 (VVFIIVFLTGWAAKSIIVKLL) and 75–95 (LWRLSTLIPSFFASFFMSLLG).

It is found in the endoplasmic reticulum membrane. This is an uncharacterized protein from Schizosaccharomyces pombe (strain 972 / ATCC 24843) (Fission yeast).